The primary structure comprises 941 residues: Peroxisomal ATPase PEX6 (941 aa).

Residues 384–391 (GIPGCGKR) and 698–705 (GPPGTGKT) each bind ATP.

Belongs to the AAA ATPase family. In terms of assembly, interacts with PEX1; forming the PEX1-PEX6 AAA ATPase complex, which is composed of a heterohexamer formed by a trimer of PEX1-PEX6 dimers. Interacts with APME9.

The protein resides in the cytoplasm. It localises to the cytosol. The protein localises to the peroxisome membrane. The enzyme catalyses ATP + H2O = ADP + phosphate + H(+). Its function is as follows. Component of the PEX1-PEX6 AAA ATPase complex, a protein dislocase complex that mediates the ATP-dependent extraction of the PEX5 receptor from peroxisomal membranes, an essential step for PEX5 recycling. Specifically recognizes PEX5 monoubiquitinated at 'Cys-11', and pulls it out of the peroxisome lumen through the PEX2-PEX10-PEX12 retrotranslocation channel. Extraction by the PEX1-PEX6 AAA ATPase complex is accompanied by unfolding of the TPR repeats and release of bound cargo from PEX5. Required for jasmonate biosynthesis. Necessary for the developmental elimination of obsolete peroxisome matix proteins. This chain is Peroxisomal ATPase PEX6, found in Arabidopsis thaliana (Mouse-ear cress).